The chain runs to 428 residues: MHDIRAIRENPEAFDRDLERRGLAPLSAELIALDDARKGAVSAAQAAQERRNALSKEIGAAKKAKDEARATELMAEVARLKEEAPGLEAAQGEAAKALDERLAAIPNRPKDDVPPGADEHGNVEYRRFDSSRERLAQGRQHFELGEATGLMDFEAAAKLSGSRFVVLKGQLARLERALGQFMLDLHTGEHGYTEVVPPVLVREEAMFGTAQLPKFRDDQFAAGENFWLIPTAEVPLTNLVRESILAEDELPLRFTALTPCFRAEAGAAGRDTRGMLRQHQFNKVELVSITAPEKSAEEHERMLACAEAVLQKLDLTYRVMTLCTGDMGFASQKTYDIEVWVPGQQTYREISSCSVCGEFQARRMNARYRAKEGRGVGFVHTLNGSGVAVGRALIAVMENYQNPDGSVTIPSALQPYMGGLTRIEGPKN.

231–233 is a binding site for L-serine; that stretch reads TAE. 262–264 contributes to the ATP binding site; the sequence is RAE. Glu-285 contacts L-serine. 349–352 serves as a coordination point for ATP; that stretch reads EISS. Position 385 (Ser-385) interacts with L-serine.

This sequence belongs to the class-II aminoacyl-tRNA synthetase family. Type-1 seryl-tRNA synthetase subfamily. In terms of assembly, homodimer. The tRNA molecule binds across the dimer.

Its subcellular location is the cytoplasm. It carries out the reaction tRNA(Ser) + L-serine + ATP = L-seryl-tRNA(Ser) + AMP + diphosphate + H(+). The enzyme catalyses tRNA(Sec) + L-serine + ATP = L-seryl-tRNA(Sec) + AMP + diphosphate + H(+). The protein operates within aminoacyl-tRNA biosynthesis; selenocysteinyl-tRNA(Sec) biosynthesis; L-seryl-tRNA(Sec) from L-serine and tRNA(Sec): step 1/1. Functionally, catalyzes the attachment of serine to tRNA(Ser). Is also able to aminoacylate tRNA(Sec) with serine, to form the misacylated tRNA L-seryl-tRNA(Sec), which will be further converted into selenocysteinyl-tRNA(Sec). The sequence is that of Serine--tRNA ligase from Methylorubrum extorquens (strain PA1) (Methylobacterium extorquens).